The primary structure comprises 148 residues: Secretory phospholipase A2 (148 aa).

Residues 1–23 (MKLSVLLALGASSLAAAAPAATA) form the signal peptide. N-linked (GlcNAc...) asparagine glycosylation is present at Asn-61. Cys-62 and Cys-78 form a disulfide bridge. His-81 is a catalytic residue. A Ca(2+)-binding site is contributed by Asp-82.

Belongs to the phospholipase A2 family. The cofactor is Ca(2+).

It localises to the secreted. The enzyme catalyses a 1,2-diacyl-sn-glycero-3-phosphocholine + H2O = a 1-acyl-sn-glycero-3-phosphocholine + a fatty acid + H(+). Functionally, secretory phospholipase that catalyzes the calcium-dependent hydrolysis of the 2-acyl groups in 3-sn-phosphoglycerides. Increases the ability to utilize host-derived nutrients and lipids, and promotes lipid dropplets accumulation. Plays a role in virulence. The polypeptide is Secretory phospholipase A2 (Arthroderma benhamiae (strain ATCC MYA-4681 / CBS 112371) (Trichophyton mentagrophytes)).